Reading from the N-terminus, the 459-residue chain is tRNA modification GTPase MnmE (459 aa).

Residues Arg-21, Glu-84, and Lys-123 each contribute to the (6S)-5-formyl-5,6,7,8-tetrahydrofolate site. Residues 219-380 form the TrmE-type G domain; the sequence is GMLTVIVGQP…LEKEIKQRVY (162 aa). Position 229 (Asn-229) interacts with K(+). GTP-binding positions include 229 to 234, 248 to 254, and 273 to 276; these read NVGKSS, TDIPGTT, and DTAG. Ser-233 serves as a coordination point for Mg(2+). The K(+) site is built by Thr-248, Ile-250, and Thr-253. Thr-254 contacts Mg(2+). Residue Lys-459 participates in (6S)-5-formyl-5,6,7,8-tetrahydrofolate binding.

This sequence belongs to the TRAFAC class TrmE-Era-EngA-EngB-Septin-like GTPase superfamily. TrmE GTPase family. As to quaternary structure, homodimer. Heterotetramer of two MnmE and two MnmG subunits. The cofactor is K(+).

The protein resides in the cytoplasm. In terms of biological role, exhibits a very high intrinsic GTPase hydrolysis rate. Involved in the addition of a carboxymethylaminomethyl (cmnm) group at the wobble position (U34) of certain tRNAs, forming tRNA-cmnm(5)s(2)U34. The chain is tRNA modification GTPase MnmE from Desulfitobacterium hafniense (strain Y51).